The sequence spans 315 residues: Putative carboxypeptidase RC0549 (315 aa).

Ser125 (nucleophile) is an active-site residue. Catalysis depends on charge relay system residues Glu225 and His288.

It belongs to the peptidase S66 family.

This Rickettsia conorii (strain ATCC VR-613 / Malish 7) protein is Putative carboxypeptidase RC0549.